A 282-amino-acid polypeptide reads, in one-letter code: Bis(5'-nucleosyl)-tetraphosphatase, symmetrical (282 aa).

The protein belongs to the Ap4A hydrolase family. Monomer.

The enzyme catalyses P(1),P(4)-bis(5'-adenosyl) tetraphosphate + H2O = 2 ADP + 2 H(+). Hydrolyzes diadenosine 5',5'''-P1,P4-tetraphosphate to yield ADP. The chain is Bis(5'-nucleosyl)-tetraphosphatase, symmetrical from Escherichia coli O157:H7.